The following is a 410-amino-acid chain: Cysteine desulfurase IscS (410 aa).

Pyridoxal 5'-phosphate-binding positions include 80-81 (AT), asparagine 160, glutamine 188, and 208-210 (SGH). Lysine 211 is subject to N6-(pyridoxal phosphate)lysine. A pyridoxal 5'-phosphate-binding site is contributed by threonine 248. The Cysteine persulfide intermediate role is filled by cysteine 334. Cysteine 334 is a [2Fe-2S] cluster binding site.

It belongs to the class-V pyridoxal-phosphate-dependent aminotransferase family. NifS/IscS subfamily. In terms of assembly, homodimer. Forms a heterotetramer with IscU, interacts with other sulfur acceptors. Requires pyridoxal 5'-phosphate as cofactor.

The protein localises to the cytoplasm. The catalysed reaction is (sulfur carrier)-H + L-cysteine = (sulfur carrier)-SH + L-alanine. The protein operates within cofactor biosynthesis; iron-sulfur cluster biosynthesis. Master enzyme that delivers sulfur to a number of partners involved in Fe-S cluster assembly, tRNA modification or cofactor biosynthesis. Catalyzes the removal of elemental sulfur atoms from cysteine to produce alanine. Functions as a sulfur delivery protein for Fe-S cluster synthesis onto IscU, an Fe-S scaffold assembly protein, as well as other S acceptor proteins. This Rickettsia peacockii (strain Rustic) protein is Cysteine desulfurase IscS.